Here is a 2904-residue protein sequence, read N- to C-terminus: Highly reducing polyketide synthase bet1 (2904 aa).

The Ketosynthase family 3 (KS3) domain maps to 8–441; sequence NEPIAIVGSG…GTNAHAIVES (434 aa). Active-site for beta-ketoacyl synthase activity residues include Cys-181, His-320, and His-361. Positions 553–875 are acyl transferase (AT) domain; that stretch reads VFTGQGAQYA…PYHGTLLRGG (323 aa). Residues 948–1081 form an N-terminal hotdog fold region; sequence HQLLGDVSPD…GELKVVLVDE (134 aa). The PKS/mFAS DH domain maps to 948-1257; sequence HQLLGDVSPD…FKPVGSDASN (310 aa). A dehydratase (DH) domain region spans residues 971–1255; it reads PREMTWLEGH…VKFKPVGSDA (285 aa). His-980 functions as the Proton acceptor; for dehydratase activity in the catalytic mechanism. The interval 1098-1257 is C-terminal hotdog fold; the sequence is MIPVQPSRLY…FKPVGSDASN (160 aa). Asp-1159 functions as the Proton donor; for dehydratase activity in the catalytic mechanism. The interval 1411–1596 is methyltransferase (cMeT) domain; the sequence is KQSTLWVASI…GFSGIDTMSP (186 aa). The ketoreductase (KR)domain stretch occupies residues 2125-2298; it reads TYWLVGLSGA…RSSVVNVGAI (174 aa). In terms of domain architecture, Carrier spans 2407 to 2486; it reads EVANVIKQAY…SLVELAAESI (80 aa). Ser-2445 is subject to O-(pantetheine 4'-phosphoryl)serine. The interval 2492 to 2543 is disordered; sequence PGVPQANANPNGPSSPDSDATESSNQNSDVDVTSTRATSPSTPAATSPDSNV. Over residues 2497-2523 the composition is skewed to polar residues; sequence ANANPNGPSSPDSDATESSNQNSDVDV. Residues 2524–2541 show a composition bias toward low complexity; it reads TSTRATSPSTPAATSPDS. Residues 2585 to 2817 form a reductase (R) domain region; it reads LTGCSGLLGH…DLVSVETCCE (233 aa).

Pantetheine 4'-phosphate is required as a cofactor.

It catalyses the reaction 7 malonyl-CoA + acetyl-CoA + 10 AH2 + 5 S-adenosyl-L-methionine + 2 H(+) = dehydroprobetaenone I + 10 A + 5 S-adenosyl-L-homocysteine + 7 CO2 + 8 CoA + 6 H2O. The protein operates within mycotoxin biosynthesis. Its function is as follows. Highly reducing polyketide synthase; part of the gene cluster that mediates the biosynthesis of betaenones, phytotoxic polyketides involved in leaf spot disease in sugar beets. The first step of the pathway is the synthesis of dehydroprobetaenone I by the polyketide synthase bet1 and the enoyl reductase bet3 via condensation of one acetyl-CoA starter unit with 7 malonyl-CoA units and 5 methylations. The C-terminal reductase (R) domain of bet1 catalyzes the reductive release of the polyketide chain. Because bet1 lacks a designated enoylreductase (ER) domain, the required activity is provided the enoyl reductase bet3. The short-chain dehydrogenase/reductase bet4 then catalyzes reduction of dehydroprobetaenone I to probetaenone I. The cytochrome P450 monooxygenase bet2 catalyzes successive epoxidation, oxidation (resulting from epoxide opening) and hydroxylation to install a tertiary alcohol in the decaline ring to yield betaenone C from dehydroprobetaenone I and betaenone B from probetaenone I. The FAD-linked oxidoreductase (orf1) is probably responsible for the conversion of betaenone C to betaenone A via an intramolecular aldol reaction between C-1 and C-17 to form the bridged tricyclic system in betaenone A. This Neocamarosporium betae (Beet black rot fungus) protein is Highly reducing polyketide synthase bet1.